Reading from the N-terminus, the 173-residue chain is Translationally-controlled tumor protein homolog (173 aa).

In terms of domain architecture, TCTP spans 1 to 173; the sequence is MIIFKDMITG…FKHGLEEEKV (173 aa).

The protein belongs to the TCTP family. In terms of tissue distribution, expressed by the venom gland.

It localises to the secreted. Its function is as follows. Venom protein that causes edema, enhances vascular permeability and is likely related to the inflammatory activity of the venom. The protein is Translationally-controlled tumor protein homolog of Grammostola rosea (Chilean rose tarantula).